Reading from the N-terminus, the 220-residue chain is Protein DGCR6 (220 aa).

Residues K76–V142 adopt a coiled-coil conformation.

Belongs to the gonadal family. As to expression, found in all tissues examined with highest expression in liver, heart and skeletal muscle. Lower levels in pancreas and placenta. Weak expression in brain.

The protein localises to the nucleus. May play a role in neural crest cell migration into the third and fourth pharyngeal pouches. The protein is Protein DGCR6 (DGCR6) of Homo sapiens (Human).